The primary structure comprises 307 residues: Ornithine carbamoyltransferase (307 aa).

Carbamoyl phosphate-binding positions include 51–54 (STRT), glutamine 78, arginine 102, and 129–132 (HPVQ). Residues asparagine 159, aspartate 223, and 227 to 228 (SM) contribute to the L-ornithine site. Residues 263 to 264 (CL) and arginine 291 contribute to the carbamoyl phosphate site.

The protein belongs to the aspartate/ornithine carbamoyltransferase superfamily. OTCase family.

It is found in the cytoplasm. The enzyme catalyses carbamoyl phosphate + L-ornithine = L-citrulline + phosphate + H(+). It functions in the pathway amino-acid biosynthesis; L-arginine biosynthesis; L-arginine from L-ornithine and carbamoyl phosphate: step 1/3. Its function is as follows. Reversibly catalyzes the transfer of the carbamoyl group from carbamoyl phosphate (CP) to the N(epsilon) atom of ornithine (ORN) to produce L-citrulline. This chain is Ornithine carbamoyltransferase, found in Wolinella succinogenes (strain ATCC 29543 / DSM 1740 / CCUG 13145 / JCM 31913 / LMG 7466 / NCTC 11488 / FDC 602W) (Vibrio succinogenes).